The primary structure comprises 221 residues: Ribosomal RNA large subunit methyltransferase E (221 aa).

S-adenosyl-L-methionine-binding residues include glycine 72, tryptophan 74, aspartate 91, aspartate 107, and aspartate 131. The Proton acceptor role is filled by lysine 171.

The protein belongs to the class I-like SAM-binding methyltransferase superfamily. RNA methyltransferase RlmE family.

It is found in the cytoplasm. The enzyme catalyses uridine(2552) in 23S rRNA + S-adenosyl-L-methionine = 2'-O-methyluridine(2552) in 23S rRNA + S-adenosyl-L-homocysteine + H(+). Specifically methylates the uridine in position 2552 of 23S rRNA at the 2'-O position of the ribose in the fully assembled 50S ribosomal subunit. The protein is Ribosomal RNA large subunit methyltransferase E of Zymomonas mobilis subsp. mobilis (strain ATCC 31821 / ZM4 / CP4).